The following is a 263-amino-acid chain: Shikimate dehydrogenase (NADP(+)) (263 aa).

Residues 16–18 (SKS) and threonine 65 contribute to the shikimate site. Lysine 69 functions as the Proton acceptor in the catalytic mechanism. Residues asparagine 90 and aspartate 105 each contribute to the shikimate site. Residues 125-129 (GSGGS) and leucine 208 each bind NADP(+). Residue tyrosine 210 participates in shikimate binding. Glycine 230 serves as a coordination point for NADP(+).

This sequence belongs to the shikimate dehydrogenase family. Homodimer.

It catalyses the reaction shikimate + NADP(+) = 3-dehydroshikimate + NADPH + H(+). Its pathway is metabolic intermediate biosynthesis; chorismate biosynthesis; chorismate from D-erythrose 4-phosphate and phosphoenolpyruvate: step 4/7. Involved in the biosynthesis of the chorismate, which leads to the biosynthesis of aromatic amino acids. Catalyzes the reversible NADPH linked reduction of 3-dehydroshikimate (DHSA) to yield shikimate (SA). The sequence is that of Shikimate dehydrogenase (NADP(+)) from Helicobacter pylori (strain G27).